Reading from the N-terminus, the 317-residue chain is L-lactate dehydrogenase (317 aa).

NAD(+)-binding positions include Val-17, Asp-38, Lys-43, Tyr-69, and 83–84; that span reads GA. Substrate contacts are provided by Gln-86 and Arg-92. Residues Ser-105, 122-124, and Ser-147 contribute to the NAD(+) site; that span reads ATN. 124-127 serves as a coordination point for substrate; sequence NPVD. Position 152–155 (152–155) interacts with substrate; the sequence is DTAR. Residues Arg-157 and His-172 each coordinate beta-D-fructose 1,6-bisphosphate. His-179 (proton acceptor) is an active-site residue. Tyr-224 is modified (phosphotyrosine). Thr-233 serves as a coordination point for substrate.

The protein belongs to the LDH/MDH superfamily. LDH family. Homotetramer.

The protein localises to the cytoplasm. The enzyme catalyses (S)-lactate + NAD(+) = pyruvate + NADH + H(+). It functions in the pathway fermentation; pyruvate fermentation to lactate; (S)-lactate from pyruvate: step 1/1. Allosterically activated by fructose 1,6-bisphosphate (FBP). Functionally, catalyzes the conversion of lactate to pyruvate. The chain is L-lactate dehydrogenase from Bacillus caldotenax.